The chain runs to 552 residues: Glucose-6-phosphate isomerase (552 aa).

Catalysis depends on E359, which acts as the Proton donor. Residues H390 and K514 contribute to the active site.

Belongs to the GPI family.

The protein localises to the cytoplasm. The catalysed reaction is alpha-D-glucose 6-phosphate = beta-D-fructose 6-phosphate. Its pathway is carbohydrate biosynthesis; gluconeogenesis. It functions in the pathway carbohydrate degradation; glycolysis; D-glyceraldehyde 3-phosphate and glycerone phosphate from D-glucose: step 2/4. Its function is as follows. Catalyzes the reversible isomerization of glucose-6-phosphate to fructose-6-phosphate. The chain is Glucose-6-phosphate isomerase from Streptomyces griseus subsp. griseus (strain JCM 4626 / CBS 651.72 / NBRC 13350 / KCC S-0626 / ISP 5235).